A 101-amino-acid chain; its full sequence is uncharacterized protein (101 aa).

Residues 72–94 (ILCPSFLNYSFINIYCFGPYTMV) form a helical membrane-spanning segment.

Its subcellular location is the membrane. This is an uncharacterized protein from Schizosaccharomyces pombe (strain 972 / ATCC 24843) (Fission yeast).